Consider the following 324-residue polypeptide: Virulence-associated V antigen (324 aa).

It localises to the secreted. Possibly involved in calcium regulation of YOP expression, which includes the export process. The sequence is that of Virulence-associated V antigen (lcrV) from Yersinia pestis (strain Pestoides F).